Here is a 439-residue protein sequence, read N- to C-terminus: Xylose isomerase (439 aa).

Active-site residues include histidine 101 and aspartate 104. Residues glutamate 232, glutamate 268, histidine 271, aspartate 296, aspartate 307, aspartate 309, and aspartate 339 each contribute to the Mg(2+) site.

This sequence belongs to the xylose isomerase family. Homotetramer. Mg(2+) serves as cofactor.

The protein localises to the cytoplasm. It catalyses the reaction alpha-D-xylose = alpha-D-xylulofuranose. The protein is Xylose isomerase of Yersinia pestis bv. Antiqua (strain Angola).